Reading from the N-terminus, the 539-residue chain is Capsid protein VP1 (539 aa).

The segment at 1–221 (MKMASNDANP…FIFLVPPTVE (221 aa)) is shell domain. The segment at 222–274 (SRTKPFTVPVLTVEEMSNSRFPIPLEKLYTGPSSAFVVQPQNGRCTTDGVLLG) is P1 sub-domain 1. The segment at 222 to 539 (SRTKPFTVPV…GNGTGRRRAL (318 aa)) is protruding domain. Positions 275–417 (TTQLSAVNIC…SGRTGHNVHL (143 aa)) are P2 sub-domain. The segment at 418–539 (APAVAPTFPG…GNGTGRRRAL (122 aa)) is P1 sub-domain 2.

The protein belongs to the caliciviridae capsid protein family. In terms of assembly, homodimer. Homomultimer. Interacts with the minor capsid protein VP2. Interacts (via C-terminus) with host type I histo-blood group structures antigens at the surface of target cells. Post-translationally, may be cleaved by host protease to generate soluble capsid protein. Assembled capsid cannot be cleaved.

It is found in the virion. Its subcellular location is the host cytoplasm. Its function is as follows. Capsid protein self assembles to form an icosahedral capsid with a T=3 symmetry, about 38 nm in diameter, and consisting of 180 capsid proteins. A smaller form of capsid with a diameter of 23 nm might be capsid proteins assembled as icosahedron with T=1 symmetry. The capsid encapsulates the genomic RNA and is decorated with VP2 proteins. Attaches virion to target cells by binding histo-blood group antigens (HBGAs) present on gastroduodenal epithelial cells. The soluble capsid protein may play a role in viral immunoevasion. This Homo sapiens (Human) protein is Capsid protein VP1.